Reading from the N-terminus, the 184-residue chain is Large ribosomal subunit protein uL5 (184 aa).

The protein belongs to the universal ribosomal protein uL5 family. Part of the 50S ribosomal subunit; part of the 5S rRNA/L5/L18/L25 subcomplex. Contacts the 5S rRNA and the P site tRNA. Forms a bridge to the 30S subunit in the 70S ribosome.

In terms of biological role, this is one of the proteins that bind and probably mediate the attachment of the 5S RNA into the large ribosomal subunit, where it forms part of the central protuberance. In the 70S ribosome it contacts protein S13 of the 30S subunit (bridge B1b), connecting the 2 subunits; this bridge is implicated in subunit movement. Contacts the P site tRNA; the 5S rRNA and some of its associated proteins might help stabilize positioning of ribosome-bound tRNAs. This is Large ribosomal subunit protein uL5 from Ureaplasma urealyticum serovar 10 (strain ATCC 33699 / Western).